Reading from the N-terminus, the 809-residue chain is WASP homolog-associated protein with actin, membranes and microtubules (809 aa).

Residues 1–260 (MEDEQPDSLE…EVATLCKLDI (260 aa)) form a mediates association with membranes region. Residues 261 to 630 (LKSLDEDDLG…FVPVGDQTHS (370 aa)) form a mediates interaction with microtubules region. Coiled coils occupy residues 271 to 298 (PRRVVALEKEAEEWTRRAEEAVVSIQDI), 384 to 479 (ELEI…CAKR), and 512 to 542 (SIQMKRDKIKEEEQKKKEWINQERQKTLQRL). 4 disordered regions span residues 506 to 528 (YSRQHHSIQMKRDKIKEEEQKKK), 546 to 571 (KDKRLAQSVRNTSGSEPVAPNLPSDL), 586 to 612 (IHPSSRKTRGVPLSEAGNVKSPKCQNC), and 627 to 707 (QTHS…FSCP). Residues 515-528 (MKRDKIKEEEQKKK) are compositionally biased toward basic and acidic residues. At Ser-606 the chain carries Phosphoserine. The tract at residues 631 to 809 (KSSEELSLPP…DEQDPGQWDG (179 aa)) is mediates actin nucleation. A compositionally biased stretch (pro residues) spans 638–659 (LPPPPPPPPPPPPPPPPPPPPL). Positions 662–673 (LSSSSQAATHQN) are enriched in polar residues. WH2 domains lie at 709–727 (SMDEVLASLRHGRAPLRKV) and 739–756 (INEHILAAIRQGVKLKKV). Residues 754-809 (KKVHPDLGPNPSSKPTSNRRTSDLERSIKAALQRIKRVSADSEEDSDEQDPGQWDG) are disordered. Positions 763–772 (NPSSKPTSNR) are enriched in polar residues. Residues 770–797 (SNRRTSDLERSIKAALQRIKRVSADSEE) adopt a coiled-coil conformation. Acidic residues predominate over residues 794 to 803 (DSEEDSDEQD). Residue Ser-795 is modified to Phosphoserine.

As to quaternary structure, interacts with ACTR3; indicative for an association with the ARP2/3 complex. Associates with microtubules; in vitro binds to tubulin heterodimer in a 1:1 stoichiometry; decorates microtubules with a repeat of 80 A along protofilaments. Interacts with RHOD (in GTP-bound form). As to expression, expressed in brain, lung, heart, colon and kidney (at protein level).

The protein localises to the cytoplasm. The protein resides in the endoplasmic reticulum-Golgi intermediate compartment. It is found in the cytoplasmic vesicle membrane. It localises to the golgi apparatus. Its subcellular location is the cis-Golgi network. Its function is as follows. Acts as a nucleation-promoting factor (NPF) that stimulates Arp2/3-mediated actin polymerization both at the Golgi apparatus and along tubular membranes. Its activity in membrane tubulation requires F-actin and interaction with microtubules. Proposed to use coordinated actin-nucleating and microtubule-binding activities of distinct WHAMM molecules to drive membrane tubule elongation; when MT-bound can recruit and remodel membrane vesicles but is prevented to activate the Arp2/3 complex. Involved as a regulator of Golgi positioning and morphology. Participates in vesicle transport between the reticulum endoplasmic and the Golgi complex. Required for RhoD-dependent actin reorganization such as in cell adhesion and cell migration. This Homo sapiens (Human) protein is WASP homolog-associated protein with actin, membranes and microtubules (WHAMM).